A 186-amino-acid polypeptide reads, in one-letter code: TATA-box-binding protein (186 aa).

A run of 2 repeats spans residues 10-86 (IENV…FDKL) and 101-179 (VQNI…VERL).

This sequence belongs to the TBP family.

Its function is as follows. General factor that plays a role in the activation of archaeal genes transcribed by RNA polymerase. Binds specifically to the TATA box promoter element which lies close to the position of transcription initiation. In Haloarcula marismortui (strain ATCC 43049 / DSM 3752 / JCM 8966 / VKM B-1809) (Halobacterium marismortui), this protein is TATA-box-binding protein.